The following is a 250-amino-acid chain: NAD-dependent protein deacetylase 2 (250 aa).

Residues 4–250 form the Deacetylase sirtuin-type domain; it reads MDSKNLFKKA…LRNIWNLIKS (247 aa). The NAD(+) site is built by Ala-29, Thr-33, Phe-40, Arg-41, Gln-107, Ile-109, Asp-110, and His-125. Residue Phe-40 coordinates nicotinamide. Nicotinamide-binding residues include Ile-109 and Asp-110. Catalysis depends on His-125, which acts as the Proton acceptor. Zn(2+) is bound by residues Cys-133, Cys-136, Cys-158, and Cys-161. Positions 198, 199, and 219 each coordinate NAD(+).

Belongs to the sirtuin family. Class U subfamily. It depends on Zn(2+) as a cofactor.

It is found in the cytoplasm. The enzyme catalyses N(6)-acetyl-L-lysyl-[protein] + NAD(+) + H2O = 2''-O-acetyl-ADP-D-ribose + nicotinamide + L-lysyl-[protein]. Functionally, NAD-dependent protein deacetylase which modulates the activities of several enzymes which are inactive in their acetylated form. This Caldanaerobacter subterraneus subsp. tengcongensis (strain DSM 15242 / JCM 11007 / NBRC 100824 / MB4) (Thermoanaerobacter tengcongensis) protein is NAD-dependent protein deacetylase 2.